The sequence spans 132 residues: Small ribosomal subunit protein uS8c (132 aa).

This sequence belongs to the universal ribosomal protein uS8 family. Part of the 30S ribosomal subunit.

Its subcellular location is the plastid. It localises to the chloroplast. Functionally, one of the primary rRNA binding proteins, it binds directly to 16S rRNA central domain where it helps coordinate assembly of the platform of the 30S subunit. This chain is Small ribosomal subunit protein uS8c (rps8), found in Chaetosphaeridium globosum (Charophycean green alga).